The sequence spans 264 residues: tRNA (guanine-N(1)-)-methyltransferase (264 aa).

149–154 (IGDYVL) is a binding site for S-adenosyl-L-methionine.

The protein belongs to the RNA methyltransferase TrmD family. As to quaternary structure, homodimer.

The protein localises to the cytoplasm. It carries out the reaction guanosine(37) in tRNA + S-adenosyl-L-methionine = N(1)-methylguanosine(37) in tRNA + S-adenosyl-L-homocysteine + H(+). In terms of biological role, specifically methylates guanosine-37 in various tRNAs. The sequence is that of tRNA (guanine-N(1)-)-methyltransferase from Methylobacillus flagellatus (strain ATCC 51484 / DSM 6875 / VKM B-1610 / KT).